A 1341-amino-acid polypeptide reads, in one-letter code: uncharacterized protein (1341 aa).

A DNA-binding region (zn(2)-C6 fungal-type) is located at residues 41–68 (CLLCRRRKQRCDHKLPSCTACLKAGIKC). 5 stretches are compositionally biased toward low complexity: residues 72–93 (SKYSSSTSNSNTNNNTPTAGTV), 779–791 (SNSANAANLSNSN), 864–906 (SNSS…NDNN), 920–967 (NHNN…GNNS), and 1036–1050 (SPSKSSSISTASSHS). Disordered regions lie at residues 72 to 100 (SKYSSSTSNSNTNNNTPTAGTVPPTPHPV), 770 to 804 (ISSGDTLHDSNSANAANLSNSNDKNISHNGGMPPA), 864 to 971 (SNSS…QYVR), and 1031 to 1116 (TMTN…NSNP). The segment covering 1057–1076 (MTQSPTPYPQTSNMLPQQHV) has biased composition (polar residues). The segment covering 1078–1090 (RPLPQQQREQPQQ) has biased composition (low complexity). The span at 1091–1116 (HITSPQRFSESNFTNQLNNGMINSNP) shows a compositional bias: polar residues. Serine 1143 carries the post-translational modification Phosphoserine. Over residues 1220-1230 (SQEPSSLSMDK) the composition is skewed to polar residues. Residues 1220–1240 (SQEPSSLSMDKQQQQHQQQNM) are disordered.

The protein localises to the nucleus. This is an uncharacterized protein from Saccharomyces cerevisiae (strain ATCC 204508 / S288c) (Baker's yeast).